Here is a 136-residue protein sequence, read N- to C-terminus: Invertebrate-type lysozyme (136 aa).

The signal sequence occupies residues 1–11 (METVSVEEGLD). The region spanning 14 to 130 (PGMVSQKCLL…WELLQKIPGC (117 aa)) is the I-type lysozyme domain. Cystine bridges form between Cys21-Cys98, Cys24-Cys130, Cys26-Cys33, Cys38-Cys47, Cys60-Cys80, Cys70-Cys76, and Cys94-Cys112. The active-site Proton donor is the Glu29. Residue Asp41 is the Nucleophile of the active site. 53 to 59 (KQPYWID) is a substrate binding site. N-linked (GlcNAc...) asparagine glycosylation occurs at Asn75. Residues Tyr84, Tyr92, 105 to 107 (HNG), and Lys119 contribute to the substrate site.

In terms of assembly, homodimer in its autoinhibited state. Active as monomer.

It is found in the secreted. The enzyme catalyses Hydrolysis of (1-&gt;4)-beta-linkages between N-acetylmuramic acid and N-acetyl-D-glucosamine residues in a peptidoglycan and between N-acetyl-D-glucosamine residues in chitodextrins.. With respect to regulation, chitinase activity is activated by high salt concentrations which cause the release of the monomer from the autoinhibited homodimer. Bacteriolytic activity against Gram-positive bacterium M.luteus and thereby probably protects against bacterial infection. Also has chitinase activity. May act as an ispopeptidase, cleaving isopeptide bonds between the side chains of Lys and Gln residues in proteins or in the cross-linking peptide of peptidoglycan in bacterial cell walls. The chain is Invertebrate-type lysozyme from Ruditapes philippinarum (Japanese carpet shell).